A 213-amino-acid chain; its full sequence is Thiopurine S-methyltransferase (213 aa).

The S-adenosyl-L-methionine site is built by tryptophan 10, leucine 46, glutamate 67, and arginine 124.

Belongs to the class I-like SAM-binding methyltransferase superfamily. TPMT family.

It is found in the cytoplasm. It carries out the reaction S-adenosyl-L-methionine + a thiopurine = S-adenosyl-L-homocysteine + a thiopurine S-methylether.. This Xanthobacter autotrophicus (strain ATCC BAA-1158 / Py2) protein is Thiopurine S-methyltransferase.